We begin with the raw amino-acid sequence, 403 residues long: Tyrosine--tRNA ligase (403 aa).

The 'HIGH' region signature appears at 45–54; it reads PTAPDLHLGH. The 'KMSKS' region motif lies at 229–233; that stretch reads KMSKS. K232 provides a ligand contact to ATP. Positions 341 to 402 constitute an S4 RNA-binding domain; that stretch reads VALCRLLAEA…GKRRFARITF (62 aa).

The protein belongs to the class-I aminoacyl-tRNA synthetase family. TyrS type 2 subfamily. In terms of assembly, homodimer.

The protein resides in the cytoplasm. It carries out the reaction tRNA(Tyr) + L-tyrosine + ATP = L-tyrosyl-tRNA(Tyr) + AMP + diphosphate + H(+). In terms of biological role, catalyzes the attachment of tyrosine to tRNA(Tyr) in a two-step reaction: tyrosine is first activated by ATP to form Tyr-AMP and then transferred to the acceptor end of tRNA(Tyr). This is Tyrosine--tRNA ligase from Geobacter sulfurreducens (strain ATCC 51573 / DSM 12127 / PCA).